The following is a 688-amino-acid chain: Glycine--tRNA ligase beta subunit (688 aa).

The protein belongs to the class-II aminoacyl-tRNA synthetase family. Tetramer of two alpha and two beta subunits.

The protein localises to the cytoplasm. It catalyses the reaction tRNA(Gly) + glycine + ATP = glycyl-tRNA(Gly) + AMP + diphosphate. The polypeptide is Glycine--tRNA ligase beta subunit (Lactobacillus delbrueckii subsp. bulgaricus (strain ATCC BAA-365 / Lb-18)).